An 867-amino-acid polypeptide reads, in one-letter code: DNA replication licensing factor mcm6 (867 aa).

The disordered stretch occupies residues 51-76 (IDKNNNNNNNEDNEDNNENENEYDEN). A compositionally biased stretch (acidic residues) spans 61-75 (EDNEDNNENENEYDE). The 207-residue stretch at 420–626 (IYQNLVNSIC…ESDHRIAEHI (207 aa)) folds into the MCM domain. ATP contacts are provided by Ser-473, Thr-474, Lys-476, Ser-477, and Asn-578. Positions 602 to 605 (SRFD) match the Arginine finger motif. Residues Arg-693 and Glu-696 each coordinate ADP.

The protein belongs to the MCM family. In terms of assembly, component of the MCM2-7 complex. The complex forms a toroidal hexameric ring with the proposed subunit order MCM2-MCM6-MCM4-MCM7-MCM3-MCM5 (By simililarity).

The protein resides in the nucleus. It catalyses the reaction ATP + H2O = ADP + phosphate + H(+). Its function is as follows. Acts as a component of the MCM2-7 complex (MCM complex) which is the replicative helicase essential for 'once per cell cycle' DNA replication initiation and elongation in eukaryotic cells. Core component of CDC45-MCM-GINS (CMG) helicase, the molecular machine that unwinds template DNA during replication, and around which the replisome is built. The active ATPase sites in the MCM2-7 ring are formed through the interaction surfaces of two neighboring subunits such that a critical structure of a conserved arginine finger motif is provided in trans relative to the ATP-binding site of the Walker A box of the adjacent subunit. The six ATPase active sites, however, are likely to contribute differentially to the complex helicase activity. In Dictyostelium discoideum (Social amoeba), this protein is DNA replication licensing factor mcm6 (mcm6).